The primary structure comprises 742 residues: Ectonucleotide pyrophosphatase/phosphodiesterase 1 (742 aa).

The Cytoplasmic segment spans residues methionine 1–lysine 113. The helical transmembrane segment at isoleucine 114–asparagine 134 threads the bilayer. Over isoleucine 135–threonine 742 the chain is Extracellular. N-linked (GlcNAc...) asparagine glycosylation is found at asparagine 161 and asparagine 204. A phosphodiesterase region spans residues proline 168–aspartate 545. Threonine 219 functions as the Nucleophile in the catalytic mechanism. 3 N-linked (GlcNAc...) asparagine glycosylation sites follow: asparagine 264, asparagine 296, and asparagine 403. Residues glutamate 640–threonine 659 show a composition bias toward acidic residues. Disordered stretches follow at residues glutamate 640–leucine 670 and threonine 686–threonine 711. Positions threonine 691–threonine 711 are enriched in low complexity.

This sequence belongs to the nucleotide pyrophosphatase/phosphodiesterase family. Autophosphorylated as part of the catalytic cycle of phosphodiesterase/pyrophosphatase activity. In terms of processing, N-glycosylated.

It localises to the membrane. The enzyme catalyses Hydrolytically removes 5'-nucleotides successively from the 3'-hydroxy termini of 3'-hydroxy-terminated oligonucleotides.. The catalysed reaction is a ribonucleoside 5'-triphosphate + H2O = a ribonucleoside 5'-phosphate + diphosphate + H(+). It carries out the reaction a 2'-deoxyribonucleoside 5'-triphosphate + H2O = a 2'-deoxyribonucleoside 5'-phosphate + diphosphate + H(+). Functionally, mediates extracellular nucleotide derived phosphate hydrolysis along with NPP2 and PHO5. This is Ectonucleotide pyrophosphatase/phosphodiesterase 1 (NPP1) from Saccharomyces cerevisiae (strain ATCC 204508 / S288c) (Baker's yeast).